The sequence spans 271 residues: Formamidopyrimidine-DNA glycosylase (271 aa).

The active-site Schiff-base intermediate with DNA is Pro-2. Glu-3 (proton donor) is an active-site residue. The Proton donor; for beta-elimination activity role is filled by Lys-58. DNA is bound by residues His-92, Arg-111, and Lys-152. The segment at 237–271 (YVYGKVQKPCKICNNIITLIRQNGRSTYFCNACQN) adopts an FPG-type zinc-finger fold. Arg-261 acts as the Proton donor; for delta-elimination activity in catalysis.

This sequence belongs to the FPG family. As to quaternary structure, monomer. Zn(2+) is required as a cofactor.

It catalyses the reaction Hydrolysis of DNA containing ring-opened 7-methylguanine residues, releasing 2,6-diamino-4-hydroxy-5-(N-methyl)formamidopyrimidine.. The catalysed reaction is 2'-deoxyribonucleotide-(2'-deoxyribose 5'-phosphate)-2'-deoxyribonucleotide-DNA = a 3'-end 2'-deoxyribonucleotide-(2,3-dehydro-2,3-deoxyribose 5'-phosphate)-DNA + a 5'-end 5'-phospho-2'-deoxyribonucleoside-DNA + H(+). Involved in base excision repair of DNA damaged by oxidation or by mutagenic agents. Acts as a DNA glycosylase that recognizes and removes damaged bases. Has a preference for oxidized purines, such as 7,8-dihydro-8-oxoguanine (8-oxoG). Has AP (apurinic/apyrimidinic) lyase activity and introduces nicks in the DNA strand. Cleaves the DNA backbone by beta-delta elimination to generate a single-strand break at the site of the removed base with both 3'- and 5'-phosphates. The protein is Formamidopyrimidine-DNA glycosylase of Wolbachia pipientis wMel.